The sequence spans 187 residues: Elongation factor P (187 aa).

The protein belongs to the elongation factor P family.

The protein resides in the cytoplasm. Its pathway is protein biosynthesis; polypeptide chain elongation. Its function is as follows. Involved in peptide bond synthesis. Stimulates efficient translation and peptide-bond synthesis on native or reconstituted 70S ribosomes in vitro. Probably functions indirectly by altering the affinity of the ribosome for aminoacyl-tRNA, thus increasing their reactivity as acceptors for peptidyl transferase. The sequence is that of Elongation factor P from Zymomonas mobilis subsp. mobilis (strain ATCC 31821 / ZM4 / CP4).